We begin with the raw amino-acid sequence, 159 residues long: 2-amino-4-hydroxy-6-hydroxymethyldihydropteridine pyrophosphokinase (159 aa).

This sequence belongs to the HPPK family. Monomer.

The catalysed reaction is 6-hydroxymethyl-7,8-dihydropterin + ATP = (7,8-dihydropterin-6-yl)methyl diphosphate + AMP + H(+). It functions in the pathway cofactor biosynthesis; tetrahydrofolate biosynthesis; 2-amino-4-hydroxy-6-hydroxymethyl-7,8-dihydropteridine diphosphate from 7,8-dihydroneopterin triphosphate: step 4/4. In terms of biological role, catalyzes the transfer of pyrophosphate from adenosine triphosphate (ATP) to 6-hydroxymethyl-7,8-dihydropterin, an enzymatic step in folate biosynthesis pathway. This chain is 2-amino-4-hydroxy-6-hydroxymethyldihydropteridine pyrophosphokinase (folK), found in Escherichia coli (strain K12).